We begin with the raw amino-acid sequence, 161 residues long: Nucleotide-binding protein Bphyt_3208 (161 aa).

This sequence belongs to the YajQ family.

In terms of biological role, nucleotide-binding protein. The chain is Nucleotide-binding protein Bphyt_3208 from Paraburkholderia phytofirmans (strain DSM 17436 / LMG 22146 / PsJN) (Burkholderia phytofirmans).